The sequence spans 152 residues: SsrA-binding protein (152 aa).

Belongs to the SmpB family.

It is found in the cytoplasm. Required for rescue of stalled ribosomes mediated by trans-translation. Binds to transfer-messenger RNA (tmRNA), required for stable association of tmRNA with ribosomes. tmRNA and SmpB together mimic tRNA shape, replacing the anticodon stem-loop with SmpB. tmRNA is encoded by the ssrA gene; the 2 termini fold to resemble tRNA(Ala) and it encodes a 'tag peptide', a short internal open reading frame. During trans-translation Ala-aminoacylated tmRNA acts like a tRNA, entering the A-site of stalled ribosomes, displacing the stalled mRNA. The ribosome then switches to translate the ORF on the tmRNA; the nascent peptide is terminated with the 'tag peptide' encoded by the tmRNA and targeted for degradation. The ribosome is freed to recommence translation, which seems to be the essential function of trans-translation. This Rickettsia felis (strain ATCC VR-1525 / URRWXCal2) (Rickettsia azadi) protein is SsrA-binding protein.